Here is a 436-residue protein sequence, read N- to C-terminus: RNA-binding motif, single-stranded-interacting protein 3 (436 aa).

The segment at 28–56 (APAPHPMAPPSPSTNSSSNNSSNNSSGEQ) is disordered. A compositionally biased stretch (pro residues) spans 30-39 (APHPMAPPSP). Residues 40-53 (STNSSSNNSSNNSS) are compositionally biased toward low complexity. RRM domains follow at residues 60-133 (TNLY…MAKQ) and 139-224 (TNLY…FADG). Residues 398–421 (TSPQTVAPSSQDTSGQQQQIAVDT) are compositionally biased toward polar residues. The interval 398–436 (TSPQTVAPSSQDTSGQQQQIAVDTSNEHAPAYSYQQSKP) is disordered.

Its subcellular location is the cytoplasm. Binds poly(A) and poly(U) oligoribonucleotides. In Pongo abelii (Sumatran orangutan), this protein is RNA-binding motif, single-stranded-interacting protein 3 (RBMS3).